The sequence spans 349 residues: Anthranilate phosphoribosyltransferase (349 aa).

Residues glycine 82, 85–86, 92–95, 110–118, and serine 122 each bind 5-phospho-alpha-D-ribose 1-diphosphate; these read GD, NVST, and KHGNRAVSG. An anthranilate-binding site is contributed by glycine 82. Residue serine 94 coordinates Mg(2+). Asparagine 113 contributes to the anthranilate binding site. Anthranilate is bound at residue arginine 168. The Mg(2+) site is built by aspartate 227 and glutamate 228.

This sequence belongs to the anthranilate phosphoribosyltransferase family. As to quaternary structure, homodimer. It depends on Mg(2+) as a cofactor.

The catalysed reaction is N-(5-phospho-beta-D-ribosyl)anthranilate + diphosphate = 5-phospho-alpha-D-ribose 1-diphosphate + anthranilate. The protein operates within amino-acid biosynthesis; L-tryptophan biosynthesis; L-tryptophan from chorismate: step 2/5. Catalyzes the transfer of the phosphoribosyl group of 5-phosphorylribose-1-pyrophosphate (PRPP) to anthranilate to yield N-(5'-phosphoribosyl)-anthranilate (PRA). In Pseudomonas putida (strain ATCC 700007 / DSM 6899 / JCM 31910 / BCRC 17059 / LMG 24140 / F1), this protein is Anthranilate phosphoribosyltransferase.